The chain runs to 378 residues: Chaperone protein DnaJ (378 aa).

Positions Asp-5–Gly-70 constitute a J domain. The segment at Gly-134 to Thr-212 adopts a CR-type zinc-finger fold. Cys-147, Cys-150, Cys-164, Cys-167, Cys-186, Cys-189, Cys-200, and Cys-203 together coordinate Zn(2+). CXXCXGXG motif repeat units follow at residues Cys-147–Gly-154, Cys-164–Gly-171, Cys-186–Gly-193, and Cys-200–Gly-207.

This sequence belongs to the DnaJ family. As to quaternary structure, homodimer. The cofactor is Zn(2+).

The protein resides in the cytoplasm. Its function is as follows. Participates actively in the response to hyperosmotic and heat shock by preventing the aggregation of stress-denatured proteins and by disaggregating proteins, also in an autonomous, DnaK-independent fashion. Unfolded proteins bind initially to DnaJ; upon interaction with the DnaJ-bound protein, DnaK hydrolyzes its bound ATP, resulting in the formation of a stable complex. GrpE releases ADP from DnaK; ATP binding to DnaK triggers the release of the substrate protein, thus completing the reaction cycle. Several rounds of ATP-dependent interactions between DnaJ, DnaK and GrpE are required for fully efficient folding. Also involved, together with DnaK and GrpE, in the DNA replication of plasmids through activation of initiation proteins. The polypeptide is Chaperone protein DnaJ (Colwellia psychrerythraea (strain 34H / ATCC BAA-681) (Vibrio psychroerythus)).